The following is a 489-amino-acid chain: Nitrogenase molybdenum-iron protein alpha chain (489 aa).

Residues Cys71, Cys97, and Cys163 each coordinate [8Fe-7S] cluster. Cys284 and His451 together coordinate [7Fe-Mo-9S-C-homocitryl] cluster.

The protein belongs to the NifD/NifK/NifE/NifN family. As to quaternary structure, tetramer of two alpha and two beta chains. Forms complex with the iron protein (nitrogenase component 2). It depends on [8Fe-7S] cluster as a cofactor. The cofactor is [7Fe-Mo-9S-C-homocitryl] cluster.

It catalyses the reaction N2 + 8 reduced [2Fe-2S]-[ferredoxin] + 16 ATP + 16 H2O = H2 + 8 oxidized [2Fe-2S]-[ferredoxin] + 2 NH4(+) + 16 ADP + 16 phosphate + 6 H(+). Functionally, this molybdenum-iron protein is part of the nitrogenase complex that catalyzes the key enzymatic reactions in nitrogen fixation. In Acidithiobacillus ferridurans, this protein is Nitrogenase molybdenum-iron protein alpha chain (nifD).